A 245-amino-acid chain; its full sequence is tRNA (guanine-N(1)-)-methyltransferase (245 aa).

S-adenosyl-L-methionine contacts are provided by residues Gly-114 and 133-138; that span reads LGDFVI.

This sequence belongs to the RNA methyltransferase TrmD family. Homodimer.

Its subcellular location is the cytoplasm. It catalyses the reaction guanosine(37) in tRNA + S-adenosyl-L-methionine = N(1)-methylguanosine(37) in tRNA + S-adenosyl-L-homocysteine + H(+). Its function is as follows. Specifically methylates guanosine-37 in various tRNAs. The chain is tRNA (guanine-N(1)-)-methyltransferase from Pediococcus pentosaceus (strain ATCC 25745 / CCUG 21536 / LMG 10740 / 183-1w).